The following is a 266-amino-acid chain: Glutaconate CoA-transferase subunit B (266 aa).

E54 is an active-site residue.

It belongs to the 3-oxoacid CoA-transferase subunit B family. Heterooctamer of four A and four B subunits.

It is found in the cytoplasm. It catalyses the reaction trans-glutaconate + acetyl-CoA = (2E)-glutaconyl-CoA + acetate. The protein operates within amino-acid degradation; L-glutamate degradation via hydroxyglutarate pathway; crotonoyl-CoA from L-glutamate: step 3/5. In terms of biological role, catalyzes the transfer of the CoA moiety from acetyl-CoA to (R)-2-hydroxyglutarate and related compounds like glutaconate. This Acidaminococcus fermentans (strain ATCC 25085 / DSM 20731 / CCUG 9996 / CIP 106432 / VR4) protein is Glutaconate CoA-transferase subunit B (gctB).